Consider the following 283-residue polypeptide: Alkaline ceramidase (283 aa).

5 residues coordinate Ca(2+): Asp-28, Trp-29, Glu-31, Asn-33, and Glu-42. 2 helical membrane-spanning segments follow: residues 43–63 (FVNT…IMLF) and 69–89 (FVTP…LSSM). Residue His-92 coordinates Zn(2+). The next 4 helical transmembrane spans lie at 98–118 (IGQL…FSLF), 134–151 (TFSW…GLSW), 154–174 (PIVN…MLYT), and 187–209 (LGIR…RIFC). 2 residues coordinate Zn(2+): His-221 and His-225. The helical transmembrane segment at 222 to 242 (GFWHIFIFIAAYTVLVLFAYF) threads the bilayer.

Belongs to the alkaline ceramidase family. It depends on Zn(2+) as a cofactor. In terms of tissue distribution, expressed in the central midgut of late embryos. In brain, it is present at the interhemispheric junction and in groups of cells in the central brain.

It localises to the membrane. The enzyme catalyses an N-acylsphing-4-enine + H2O = sphing-4-enine + a fatty acid. Functionally, hydrolyzes the sphingolipid ceramide into sphingosine and free fatty acid. This Drosophila melanogaster (Fruit fly) protein is Alkaline ceramidase (bwa).